The following is a 316-amino-acid chain: UDP-N-acetylglucosamine transporter yea4 (316 aa).

The Cytoplasmic portion of the chain corresponds to 1 to 3; sequence MIA. Residues 4-24 traverse the membrane as a helical segment; it reads SALSFIFGGCCSNAYALEALV. Over 25–31 the chain is Lumenal; that stretch reads REFPSSG. Residues 32–52 traverse the membrane as a helical segment; it reads ILITFSQFILITIEGLIYFLL. Residues 53-67 are Cytoplasmic-facing; sequence NDVQSLKHPKVPRKR. A helical membrane pass occupies residues 68–88; sequence WFVVVVMFFAINVLNNVALGF. The Lumenal portion of the chain corresponds to 89–120; the sequence is DISVPVHIILRSSGPLTTMAVGRILAGKRYSS. Residues 121-141 traverse the membrane as a helical segment; that stretch reads LQIGSVFILTIGVIIATLGNA. Residues 142–153 lie on the Cytoplasmic side of the membrane; the sequence is KDLHLHVESMTR. Residues 154–174 traverse the membrane as a helical segment; sequence FGIGFTILVITQILGAIMGLV. Residues 175 to 187 are Lumenal-facing; the sequence is LENTYRIYGSDWR. The chain crosses the membrane as a helical span at residues 188–208; the sequence is ESLFYTHALSLPFFLFLLRPI. The Cytoplasmic segment spans residues 209–214; that stretch reads RSQWND. A helical transmembrane segment spans residues 215–235; that stretch reads LFAIHTKGFLNLPSGVWYLCF. Residues 236–274 lie on the Lumenal side of the membrane; that stretch reads NTLAQYFCVRGVNALGAETSALTVSVVLNVRKFVSLCLS. A helical membrane pass occupies residues 275 to 295; the sequence is LILFENEMGPAVKFGALLVFG. Topologically, residues 296-316 are cytoplasmic; it reads SSAVYASARSKPKTNGLKKND.

This sequence belongs to the nucleotide-sugar transporter family. SLC35B subfamily.

The protein resides in the endoplasmic reticulum. The protein localises to the endoplasmic reticulum membrane. Its function is as follows. Sugar transporter that specifically mediates the transport of UDP-N-acetylglucosamine (UDP-GlcNAc) and is required for cell wall chitin synthesis. This chain is UDP-N-acetylglucosamine transporter yea4 (yea4), found in Schizosaccharomyces pombe (strain 972 / ATCC 24843) (Fission yeast).